The following is a 310-amino-acid chain: 4-diphosphocytidyl-2-C-methyl-D-erythritol kinase (310 aa).

Lysine 20 is an active-site residue. 106-116 (PMGGGLGGGSS) is a binding site for ATP. The active site involves aspartate 148.

It belongs to the GHMP kinase family. IspE subfamily. In terms of assembly, homodimer.

The enzyme catalyses 4-CDP-2-C-methyl-D-erythritol + ATP = 4-CDP-2-C-methyl-D-erythritol 2-phosphate + ADP + H(+). The protein operates within isoprenoid biosynthesis; isopentenyl diphosphate biosynthesis via DXP pathway; isopentenyl diphosphate from 1-deoxy-D-xylulose 5-phosphate: step 3/6. Its function is as follows. Catalyzes the phosphorylation of the position 2 hydroxy group of 4-diphosphocytidyl-2C-methyl-D-erythritol. The sequence is that of 4-diphosphocytidyl-2-C-methyl-D-erythritol kinase from Yersinia pseudotuberculosis serotype O:3 (strain YPIII).